The following is a 361-amino-acid chain: Phosphoserine aminotransferase (361 aa).

Arginine 42 contributes to the L-glutamate binding site. Pyridoxal 5'-phosphate contacts are provided by residues 76-77 (AT), tryptophan 102, threonine 152, aspartate 172, and glutamine 195. At lysine 196 the chain carries N6-(pyridoxal phosphate)lysine. 237-238 (NT) serves as a coordination point for pyridoxal 5'-phosphate.

Belongs to the class-V pyridoxal-phosphate-dependent aminotransferase family. SerC subfamily. As to quaternary structure, homodimer. Requires pyridoxal 5'-phosphate as cofactor.

Its subcellular location is the cytoplasm. The catalysed reaction is O-phospho-L-serine + 2-oxoglutarate = 3-phosphooxypyruvate + L-glutamate. It catalyses the reaction 4-(phosphooxy)-L-threonine + 2-oxoglutarate = (R)-3-hydroxy-2-oxo-4-phosphooxybutanoate + L-glutamate. It participates in amino-acid biosynthesis; L-serine biosynthesis; L-serine from 3-phospho-D-glycerate: step 2/3. The protein operates within cofactor biosynthesis; pyridoxine 5'-phosphate biosynthesis; pyridoxine 5'-phosphate from D-erythrose 4-phosphate: step 3/5. Its function is as follows. Catalyzes the reversible conversion of 3-phosphohydroxypyruvate to phosphoserine and of 3-hydroxy-2-oxo-4-phosphonooxybutanoate to phosphohydroxythreonine. The protein is Phosphoserine aminotransferase of Stenotrophomonas maltophilia (strain K279a).